The sequence spans 170 residues: MQIQVGSQNPTKIQAVKEMFPNIDVIGVQAESGVSAQPFSDEETKLGAITRAKYCAMNNPYTIGVGLEGGVMYIDNELYLCNWGALVTPENDIITASGARIKIPNDVEEGLLKNIELGELMDTYAEKKDVSKKEGAIGIFTNQLITRKEMFRHVVTLLKGQWMLLNSNNH.

Residue Glu-31 participates in Mg(2+) binding.

The protein belongs to the YjjX NTPase family. As to quaternary structure, homodimer. It depends on Mg(2+) as a cofactor. Mn(2+) serves as cofactor.

The enzyme catalyses XTP + H2O = XDP + phosphate + H(+). The catalysed reaction is ITP + H2O = IDP + phosphate + H(+). Functionally, phosphatase that hydrolyzes non-canonical purine nucleotides such as XTP and ITP to their respective diphosphate derivatives. Probably excludes non-canonical purines from DNA/RNA precursor pool, thus preventing their incorporation into DNA/RNA and avoiding chromosomal lesions. This chain is Probable inosine/xanthosine triphosphatase, found in Oceanobacillus iheyensis (strain DSM 14371 / CIP 107618 / JCM 11309 / KCTC 3954 / HTE831).